Reading from the N-terminus, the 208-residue chain is MDLFDLIFPPPPQSPSKLHPTQNHILPPEPLNRDFGDTRKNHKKAQPRRTTKAPSTSSPTIHDRQTPPRPTTPKSPTEKLLPIYHKFADGTEVVNPAAYAQRGFGWVKQNNTARVSWAKWAQSTKKCDDDIYGLKWIEERYPNWRDSNFRIRERRRSRSRSPQLSDNGSEDISIYLGRANSSSPNPTATGSETSYGSPTDAIYIPRNY.

Disordered regions lie at residues 1–78 (MDLF…SPTE) and 154–208 (RRRS…PRNY). A compositionally biased stretch (basic residues) spans 40–51 (KNHKKAQPRRTT). The span at 179 to 197 (ANSSSPNPTATGSETSYGS) shows a compositional bias: polar residues.

This is an uncharacterized protein from Caenorhabditis elegans.